The primary structure comprises 467 residues: Asparagine--tRNA ligase (467 aa).

This sequence belongs to the class-II aminoacyl-tRNA synthetase family. Homodimer.

The protein resides in the cytoplasm. It catalyses the reaction tRNA(Asn) + L-asparagine + ATP = L-asparaginyl-tRNA(Asn) + AMP + diphosphate + H(+). The chain is Asparagine--tRNA ligase from Histophilus somni (strain 129Pt) (Haemophilus somnus).